The chain runs to 985 residues: Thioredoxin domain-containing protein 11 (985 aa).

Gly residues predominate over residues 1–11; sequence MSECGGRGGGS. The interval 1 to 38 is disordered; sequence MSECGGRGGGSSSSEDAEDEGGGGGGPAGSDCLSSSPT. Residues 29–38 show a composition bias toward low complexity; it reads GSDCLSSSPT. A helical membrane pass occupies residues 65 to 85; the sequence is LLCGAVALGCALLLALKFTCS. The region spanning 92–214 is the Thioredoxin 1 domain; that stretch reads IPAKPPVSFF…IEKFVRRVMK (123 aa). 2 cysteine pairs are disulfide-bonded: Cys-469/Cys-472 and Cys-719/Cys-722. The 151-residue stretch at 649–799 folds into the Thioredoxin 2 domain; it reads LDPKQALMKL…LLRFILHHSD (151 aa). Residues 821–919 adopt a coiled-coil conformation; that stretch reads VLQRGHISHL…ASENLLTENT (99 aa). Ser-828 carries the phosphoserine modification. The interval 935–985 is disordered; it reads RDGAESLAAQREVHPKQPEPSATPQLPGSSPPPANVSATLVSERNKENRTD.

It belongs to the protein disulfide isomerase family. In terms of assembly, interacts with the cytoplasmic part of DUOX1 and DUOX2. Interacts with TPO and CYBA. In terms of tissue distribution, widely expressed at low level. Expressed at higher level in thyroid and prostate.

It is found in the endoplasmic reticulum membrane. Its function is as follows. May act as a redox regulator involved in DUOX proteins folding. The interaction with DUOX1 and DUOX2 suggest that it belongs to a multiprotein complex constituting the thyroid H(2)O(2) generating system. It is however not sufficient to assist DUOX1 and DUOX2 in H(2)O(2) generation. The chain is Thioredoxin domain-containing protein 11 (TXNDC11) from Homo sapiens (Human).